The following is a 130-amino-acid chain: Small ribosomal subunit protein uS11 (130 aa).

The protein belongs to the universal ribosomal protein uS11 family. In terms of assembly, part of the 30S ribosomal subunit. Interacts with proteins S7 and S18. Binds to IF-3.

Its function is as follows. Located on the platform of the 30S subunit, it bridges several disparate RNA helices of the 16S rRNA. Forms part of the Shine-Dalgarno cleft in the 70S ribosome. This Shewanella sediminis (strain HAW-EB3) protein is Small ribosomal subunit protein uS11.